The following is a 137-amino-acid chain: Nucleoside diphosphate kinase (137 aa).

ATP is bound by residues Lys10, Phe58, Arg86, Thr92, Arg103, and Asn113. His116 (pros-phosphohistidine intermediate) is an active-site residue.

It belongs to the NDK family. In terms of assembly, homotetramer. The cofactor is Mg(2+).

The protein resides in the cytoplasm. It carries out the reaction a 2'-deoxyribonucleoside 5'-diphosphate + ATP = a 2'-deoxyribonucleoside 5'-triphosphate + ADP. It catalyses the reaction a ribonucleoside 5'-diphosphate + ATP = a ribonucleoside 5'-triphosphate + ADP. Its function is as follows. Major role in the synthesis of nucleoside triphosphates other than ATP. The ATP gamma phosphate is transferred to the NDP beta phosphate via a ping-pong mechanism, using a phosphorylated active-site intermediate. This chain is Nucleoside diphosphate kinase, found in Helicobacter acinonychis (strain Sheeba).